Consider the following 309-residue polypeptide: MEKVLVFGHKNPDTDAICSAIAYAELKKELGMNAEPVRLGEISGETQFALDYFKVEGPRFVETVANEVDNVILVDHNERQQSANDIESVRVLEVIDHHRIANFETSDPIYYRCEPVGCTATILNKMYKENGVTIRKEVAGLMLSAIISDSLLFKSPTCTEQDVAAARELAEIADVDADNYGLEMLKAGADLSGKTMEQLISLDAKEFQMGNAKVEIAQVNAVDTNDVLVHQAELEKVISAVVEEKGLDLFLFVVTDILTNDSVGLAIGKAANVVEKAYNVPLENNTATLKGVVSRKKQIVPVLTEAFQA.

The Mn(2+) site is built by histidine 9, aspartate 13, aspartate 15, aspartate 75, histidine 97, and aspartate 149.

This sequence belongs to the PPase class C family. The cofactor is Mn(2+).

The protein localises to the cytoplasm. It carries out the reaction diphosphate + H2O = 2 phosphate + H(+). The protein is Probable manganese-dependent inorganic pyrophosphatase of Bacillus cereus (strain 03BB102).